Reading from the N-terminus, the 307-residue chain is Ribosomal RNA small subunit methyltransferase H (307 aa).

S-adenosyl-L-methionine is bound by residues 32-34 (GGH), Asp-52, Phe-78, Asp-99, and Gln-106.

It belongs to the methyltransferase superfamily. RsmH family.

Its subcellular location is the cytoplasm. It catalyses the reaction cytidine(1402) in 16S rRNA + S-adenosyl-L-methionine = N(4)-methylcytidine(1402) in 16S rRNA + S-adenosyl-L-homocysteine + H(+). Functionally, specifically methylates the N4 position of cytidine in position 1402 (C1402) of 16S rRNA. The sequence is that of Ribosomal RNA small subunit methyltransferase H from Acinetobacter baumannii (strain SDF).